The sequence spans 491 residues: UDP-N-acetylmuramoyl-L-alanyl-D-glutamate--2,6-diaminopimelate ligase (491 aa).

S30 is a UDP-N-acetyl-alpha-D-muramoyl-L-alanyl-D-glutamate binding site. An ATP-binding site is contributed by 108-114; sequence GTNGKTT. Residues N149, 150–151, S177, Q183, and R185 each bind UDP-N-acetyl-alpha-D-muramoyl-L-alanyl-D-glutamate; that span reads TT. K217 carries the post-translational modification N6-carboxylysine. Meso-2,6-diaminopimelate is bound by residues R383, 407–410, G458, and E462; that span reads DNPR. Residues 407–410 carry the Meso-diaminopimelate recognition motif motif; the sequence is DNPR.

Belongs to the MurCDEF family. MurE subfamily. Requires Mg(2+) as cofactor. Post-translationally, carboxylation is probably crucial for Mg(2+) binding and, consequently, for the gamma-phosphate positioning of ATP.

The protein localises to the cytoplasm. The catalysed reaction is UDP-N-acetyl-alpha-D-muramoyl-L-alanyl-D-glutamate + meso-2,6-diaminopimelate + ATP = UDP-N-acetyl-alpha-D-muramoyl-L-alanyl-gamma-D-glutamyl-meso-2,6-diaminopimelate + ADP + phosphate + H(+). Its pathway is cell wall biogenesis; peptidoglycan biosynthesis. In terms of biological role, catalyzes the addition of meso-diaminopimelic acid to the nucleotide precursor UDP-N-acetylmuramoyl-L-alanyl-D-glutamate (UMAG) in the biosynthesis of bacterial cell-wall peptidoglycan. In Listeria innocua serovar 6a (strain ATCC BAA-680 / CLIP 11262), this protein is UDP-N-acetylmuramoyl-L-alanyl-D-glutamate--2,6-diaminopimelate ligase.